Consider the following 122-residue polypeptide: Large ribosomal subunit protein uL14 (122 aa).

This sequence belongs to the universal ribosomal protein uL14 family. Part of the 50S ribosomal subunit. Forms a cluster with proteins L3 and L19. In the 70S ribosome, L14 and L19 interact and together make contacts with the 16S rRNA in bridges B5 and B8.

In terms of biological role, binds to 23S rRNA. Forms part of two intersubunit bridges in the 70S ribosome. In Ralstonia nicotianae (strain ATCC BAA-1114 / GMI1000) (Ralstonia solanacearum), this protein is Large ribosomal subunit protein uL14.